A 305-amino-acid chain; its full sequence is UDP-3-O-acyl-N-acetylglucosamine deacetylase (305 aa).

Residues His-79, His-238, and Asp-242 each contribute to the Zn(2+) site. The active-site Proton donor is the His-265.

This sequence belongs to the LpxC family. It depends on Zn(2+) as a cofactor.

It carries out the reaction a UDP-3-O-[(3R)-3-hydroxyacyl]-N-acetyl-alpha-D-glucosamine + H2O = a UDP-3-O-[(3R)-3-hydroxyacyl]-alpha-D-glucosamine + acetate. It functions in the pathway glycolipid biosynthesis; lipid IV(A) biosynthesis; lipid IV(A) from (3R)-3-hydroxytetradecanoyl-[acyl-carrier-protein] and UDP-N-acetyl-alpha-D-glucosamine: step 2/6. Catalyzes the hydrolysis of UDP-3-O-myristoyl-N-acetylglucosamine to form UDP-3-O-myristoylglucosamine and acetate, the committed step in lipid A biosynthesis. This chain is UDP-3-O-acyl-N-acetylglucosamine deacetylase, found in Pectobacterium atrosepticum (strain SCRI 1043 / ATCC BAA-672) (Erwinia carotovora subsp. atroseptica).